A 402-amino-acid polypeptide reads, in one-letter code: Glutamate N-acetyltransferase (402 aa).

Substrate-binding residues include Thr-151, Lys-178, Thr-189, Glu-267, Asn-397, and Thr-402. Thr-189 serves as the catalytic Nucleophile.

Belongs to the ArgJ family. Heterotetramer of two alpha and two beta chains.

The protein resides in the cytoplasm. It catalyses the reaction N(2)-acetyl-L-ornithine + L-glutamate = N-acetyl-L-glutamate + L-ornithine. The protein operates within amino-acid biosynthesis; L-arginine biosynthesis; L-ornithine and N-acetyl-L-glutamate from L-glutamate and N(2)-acetyl-L-ornithine (cyclic): step 1/1. Its function is as follows. Catalyzes the transfer of the acetyl group from N(2)-acetylornithine to glutamate, forming N-acetylglutamate and L-ornithine. This Methanothermobacter thermautotrophicus (strain ATCC 29096 / DSM 1053 / JCM 10044 / NBRC 100330 / Delta H) (Methanobacterium thermoautotrophicum) protein is Glutamate N-acetyltransferase.